A 396-amino-acid polypeptide reads, in one-letter code: Elongation factor Tu (396 aa).

The tr-type G domain maps to 10–206 (KPHVNVGTIG…ALDSYIPEPE (197 aa)). Positions 19–26 (GHVDHGKT) are G1. 19 to 26 (GHVDHGKT) is a binding site for GTP. Thr26 serves as a coordination point for Mg(2+). The G2 stretch occupies residues 60–64 (GITIN). Residues 81–84 (DCPG) are G3. GTP contacts are provided by residues 81–85 (DCPGH) and 136–139 (NKCD). Residues 136–139 (NKCD) are G4. A G5 region spans residues 174 to 176 (SAL).

This sequence belongs to the TRAFAC class translation factor GTPase superfamily. Classic translation factor GTPase family. EF-Tu/EF-1A subfamily. Monomer.

Its subcellular location is the cytoplasm. The enzyme catalyses GTP + H2O = GDP + phosphate + H(+). In terms of biological role, GTP hydrolase that promotes the GTP-dependent binding of aminoacyl-tRNA to the A-site of ribosomes during protein biosynthesis. The sequence is that of Elongation factor Tu from Acinetobacter baumannii (strain ATCC 17978 / DSM 105126 / CIP 53.77 / LMG 1025 / NCDC KC755 / 5377).